A 149-amino-acid chain; its full sequence is UPF0260 protein Avin_32930 (149 aa).

Belongs to the UPF0260 family.

The sequence is that of UPF0260 protein Avin_32930 from Azotobacter vinelandii (strain DJ / ATCC BAA-1303).